Consider the following 700-residue polypeptide: Elongation factor G (700 aa).

The tr-type G domain maps to 8–290 (ERYRNIGISA…AVVEYLPAPT (283 aa)). GTP is bound by residues 17–24 (AHIDAGKT), 88–92 (DTPGH), and 142–145 (NKMD).

It belongs to the TRAFAC class translation factor GTPase superfamily. Classic translation factor GTPase family. EF-G/EF-2 subfamily.

Its subcellular location is the cytoplasm. In terms of biological role, catalyzes the GTP-dependent ribosomal translocation step during translation elongation. During this step, the ribosome changes from the pre-translocational (PRE) to the post-translocational (POST) state as the newly formed A-site-bound peptidyl-tRNA and P-site-bound deacylated tRNA move to the P and E sites, respectively. Catalyzes the coordinated movement of the two tRNA molecules, the mRNA and conformational changes in the ribosome. This Haemophilus influenzae (strain PittEE) protein is Elongation factor G.